Consider the following 306-residue polypeptide: Formamidopyrimidine-DNA glycosylase (306 aa).

Catalysis depends on Pro2, which acts as the Schiff-base intermediate with DNA. Glu3 serves as the catalytic Proton donor. Lys58 serves as the catalytic Proton donor; for beta-elimination activity. Residues His114, Arg136, and Lys179 each coordinate DNA. An FPG-type zinc finger spans residues 270-306 (SVYDREGEACRTSGCRGTVERIVQAGRSTFYCPHCQK). Residue Arg296 is the Proton donor; for delta-elimination activity of the active site.

The protein belongs to the FPG family. Monomer. Requires Zn(2+) as cofactor.

The catalysed reaction is Hydrolysis of DNA containing ring-opened 7-methylguanine residues, releasing 2,6-diamino-4-hydroxy-5-(N-methyl)formamidopyrimidine.. It catalyses the reaction 2'-deoxyribonucleotide-(2'-deoxyribose 5'-phosphate)-2'-deoxyribonucleotide-DNA = a 3'-end 2'-deoxyribonucleotide-(2,3-dehydro-2,3-deoxyribose 5'-phosphate)-DNA + a 5'-end 5'-phospho-2'-deoxyribonucleoside-DNA + H(+). Involved in base excision repair of DNA damaged by oxidation or by mutagenic agents. Acts as a DNA glycosylase that recognizes and removes damaged bases. Has a preference for oxidized purines, such as 7,8-dihydro-8-oxoguanine (8-oxoG). Has AP (apurinic/apyrimidinic) lyase activity and introduces nicks in the DNA strand. Cleaves the DNA backbone by beta-delta elimination to generate a single-strand break at the site of the removed base with both 3'- and 5'-phosphates. The chain is Formamidopyrimidine-DNA glycosylase from Sinorhizobium medicae (strain WSM419) (Ensifer medicae).